The primary structure comprises 180 residues: Large ribosomal subunit protein uL5 (180 aa).

It belongs to the universal ribosomal protein uL5 family. In terms of assembly, part of the 50S ribosomal subunit; part of the 5S rRNA/L5/L18/L25 subcomplex. Contacts the 5S rRNA and the P site tRNA. Forms a bridge to the 30S subunit in the 70S ribosome.

In terms of biological role, this is one of the proteins that bind and probably mediate the attachment of the 5S RNA into the large ribosomal subunit, where it forms part of the central protuberance. In the 70S ribosome it contacts protein S13 of the 30S subunit (bridge B1b), connecting the 2 subunits; this bridge is implicated in subunit movement. Contacts the P site tRNA; the 5S rRNA and some of its associated proteins might help stabilize positioning of ribosome-bound tRNAs. This Streptococcus thermophilus (strain CNRZ 1066) protein is Large ribosomal subunit protein uL5.